The following is a 70-amino-acid chain: UPF0519 protein B (70 aa).

Belongs to the UPF0519 family.

In Dictyostelium discoideum (Social amoeba), this protein is UPF0519 protein B (sigN122).